The chain runs to 318 residues: NLP effector protein 7 (318 aa).

The first 19 residues, 1-19 (MRLFAFLWSSVAFLSTVQA), serve as a signal peptide directing secretion. Residues 23–41 (QTASQTQDDSSTPTPTPTD) show a composition bias toward low complexity. 2 disordered regions span residues 23–42 (QTAS…PTDK) and 51–96 (RTKT…TPDP). Positions 55–65 (PMATPNRTIMP) are enriched in polar residues. A glycan (N-linked (GlcNAc...) asparagine) is linked at asparagine 60. Pro residues predominate over residues 73–96 (TEPPTPEPTYLPTPSPTPAPTPDP). A Conserved undecapeptide motif I motif is present at residues 185 to 195 (AIMYSWYFPKD). The Hepta-peptide GHRHDWE motif II signature appears at 202–208 (GHRHDWE).

Belongs to the Necrosis inducing protein (NPP1) family.

It localises to the secreted. In terms of biological role, secreted effector that contributes moderately to virulence during infection by P.capsici. Does not cause visible reaction of C.annuum for several days after inoculation, but by 7 days after inoculation, small necrotic lesions become visible. Leads only to chlorotic areas, without necrosis at 7 days after non-host N.benthamiana leaves infection. This Phytophthora capsici protein is NLP effector protein 7.